The sequence spans 360 residues: DNA polymerase IV (360 aa).

One can recognise a UmuC domain in the interval 6-187 (IIHVDMDAFY…LKIGDLHGVG (182 aa)). Asp10 and Asp105 together coordinate Mg(2+). The active site involves Glu106.

The protein belongs to the DNA polymerase type-Y family. As to quaternary structure, monomer. Mg(2+) is required as a cofactor.

Its subcellular location is the cytoplasm. The catalysed reaction is DNA(n) + a 2'-deoxyribonucleoside 5'-triphosphate = DNA(n+1) + diphosphate. Poorly processive, error-prone DNA polymerase involved in untargeted mutagenesis. Copies undamaged DNA at stalled replication forks, which arise in vivo from mismatched or misaligned primer ends. These misaligned primers can be extended by PolIV. Exhibits no 3'-5' exonuclease (proofreading) activity. May be involved in translesional synthesis, in conjunction with the beta clamp from PolIII. This chain is DNA polymerase IV, found in Exiguobacterium sibiricum (strain DSM 17290 / CCUG 55495 / CIP 109462 / JCM 13490 / 255-15).